A 371-amino-acid polypeptide reads, in one-letter code: Queuine tRNA-ribosyltransferase (371 aa).

Asp-93 (proton acceptor) is an active-site residue. Residues 93 to 97 (DSGGF), Asp-147, Gln-191, and Gly-218 each bind substrate. Residues 249-255 (GVGTPLD) form an RNA binding region. Asp-268 (nucleophile) is an active-site residue. The interval 273–277 (TRNAR) is RNA binding; important for wobble base 34 recognition. Residues Cys-306, Cys-308, Cys-311, and His-337 each coordinate Zn(2+).

The protein belongs to the queuine tRNA-ribosyltransferase family. As to quaternary structure, homodimer. Within each dimer, one monomer is responsible for RNA recognition and catalysis, while the other monomer binds to the replacement base PreQ1. Zn(2+) is required as a cofactor.

It carries out the reaction 7-aminomethyl-7-carbaguanine + guanosine(34) in tRNA = 7-aminomethyl-7-carbaguanosine(34) in tRNA + guanine. It participates in tRNA modification; tRNA-queuosine biosynthesis. In terms of biological role, catalyzes the base-exchange of a guanine (G) residue with the queuine precursor 7-aminomethyl-7-deazaguanine (PreQ1) at position 34 (anticodon wobble position) in tRNAs with GU(N) anticodons (tRNA-Asp, -Asn, -His and -Tyr). Catalysis occurs through a double-displacement mechanism. The nucleophile active site attacks the C1' of nucleotide 34 to detach the guanine base from the RNA, forming a covalent enzyme-RNA intermediate. The proton acceptor active site deprotonates the incoming PreQ1, allowing a nucleophilic attack on the C1' of the ribose to form the product. After dissociation, two additional enzymatic reactions on the tRNA convert PreQ1 to queuine (Q), resulting in the hypermodified nucleoside queuosine (7-(((4,5-cis-dihydroxy-2-cyclopenten-1-yl)amino)methyl)-7-deazaguanosine). In Lawsonia intracellularis (strain PHE/MN1-00), this protein is Queuine tRNA-ribosyltransferase.